We begin with the raw amino-acid sequence, 148 residues long: Deoxyuridine 5'-triphosphate nucleotidohydrolase (148 aa).

Residues 67-69, asparagine 80, 84-86, and lysine 94 each bind substrate; these read RSG and TID.

The protein belongs to the dUTPase family. Requires Mg(2+) as cofactor.

It carries out the reaction dUTP + H2O = dUMP + diphosphate + H(+). It participates in pyrimidine metabolism; dUMP biosynthesis; dUMP from dCTP (dUTP route): step 2/2. This enzyme is involved in nucleotide metabolism: it produces dUMP, the immediate precursor of thymidine nucleotides and it decreases the intracellular concentration of dUTP so that uracil cannot be incorporated into DNA. The chain is Deoxyuridine 5'-triphosphate nucleotidohydrolase from Orientia tsutsugamushi (strain Ikeda) (Rickettsia tsutsugamushi).